The primary structure comprises 728 residues: Polyphosphate kinase (728 aa).

Residue N57 coordinates ATP. The Mg(2+) site is built by R408 and R438. The Phosphohistidine intermediate role is filled by H468. Positions 501, 597, and 625 each coordinate ATP. Residues 694–728 (VQRRPASPEQSQSSQAIFTAQAIAETTEDPELRSV) form a disordered region. Residues 695 to 709 (QRRPASPEQSQSSQA) are compositionally biased toward low complexity.

This sequence belongs to the polyphosphate kinase 1 (PPK1) family. Mg(2+) serves as cofactor. In terms of processing, an intermediate of this reaction is the autophosphorylated ppk in which a phosphate is covalently linked to a histidine residue through a N-P bond.

It carries out the reaction [phosphate](n) + ATP = [phosphate](n+1) + ADP. In terms of biological role, catalyzes the reversible transfer of the terminal phosphate of ATP to form a long-chain polyphosphate (polyP). This is Polyphosphate kinase from Synechocystis sp. (strain ATCC 27184 / PCC 6803 / Kazusa).